The primary structure comprises 357 residues: U5 small nuclear ribonucleoprotein 40 kDa protein (357 aa).

Residue Lys18 forms a Glycyl lysine isopeptide (Lys-Gly) (interchain with G-Cter in SUMO2) linkage. Position 21 is an asymmetric dimethylarginine (Arg21). 7 WD repeats span residues 64–103, 107–146, 149–189, 191–230, 233–272, 283–322, and 325–357; these read GHEG…DNYA, GHSG…RVKR, GHTS…AIQT, QNTY…LTYT, GHAD…PKER, NFEK…ILYK, and GHAG…GEIQ. Residue Lys270 forms a Glycyl lysine isopeptide (Lys-Gly) (interchain with G-Cter in SUMO2) linkage.

In terms of assembly, component of the pre-catalytic and catalytic spliceosome complexes. Component of the postcatalytic spliceosome P complex. Part of the U5 snRNP complex. Interacts with PRPF8. Component of the U4/U6-U5 tri-snRNP complex composed of the U4, U6 and U5 snRNAs and at least PRPF3, PRPF4, PRPF6, PRPF8, PRPF31, SNRNP200, TXNL4A, WDR57, SNRNP40, DDX23, CD2BP2, PPIH, SNU13, EFTUD2, SART1 and USP39. Component of the minor spliceosome, which splices U12-type introns.

It localises to the nucleus. In terms of biological role, required for pre-mRNA splicing as component of the activated spliceosome. Component of the U5 small nuclear ribonucleoprotein (snRNP) complex and the U4/U6-U5 tri-snRNP complex, building blocks of the spliceosome. As a component of the minor spliceosome, involved in the splicing of U12-type introns in pre-mRNAs. The chain is U5 small nuclear ribonucleoprotein 40 kDa protein (SNRNP40) from Homo sapiens (Human).